Here is a 138-residue protein sequence, read N- to C-terminus: Basic phospholipase A2 homolog MjTX-I (138 aa).

A signal peptide spans 1-16 (MRTLWIMAVLLVGVEG). V34 is a suramin binding site. Disulfide bonds link C42–C132, C44–C60, C59–C111, C65–C138, C66–C104, C73–C97, and C91–C102. N43 contributes to the varespladib binding site. Suramin-binding residues include G45 and G48. Varespladib-binding residues include H63 and K64. Residue K85 coordinates suramin.

The protein belongs to the phospholipase A2 family. Group II subfamily. K49 sub-subfamily. In terms of assembly, monomer in solution. Homodimer; non-covalently linked (probable conventional/extended dimer conformation). Homotetramer (dimer of homodimer (probable conventional/extended dimer conformation)); non-covalently linked. Homooligomer. In terms of tissue distribution, expressed by the venom gland.

It localises to the secreted. Myotoxin activity is inhibited by suramin and varespladib. Inhibition by suramin may be caused by (i) distortion of MDiS from both monomers impairing the membrane disruption mechanism by the toxin and (ii) surface electrostatic changes of the complex that interfere with the toxin membrane dockage process (putative-MDoS is partially hidden). Inhibition by varespladib is probably through varespladib binding to MDoS. In terms of biological role, snake venom phospholipase A2 homolog that lacks enzymatic activity. In vivo, it displays local myotoxin and edema-inducing activities and is lethal by intraperitoneal injection. The myotoxicity effect is weaker in comparison to other myotoxins, probably due to the formation of high molecular weight complexes and to the oligomeric conformation (conventional dimer). It shows specificity toward neurons and myotubes, but not on a variety of other cell types. This PLA2 excites a cohort of sensory neurons via ATP release and consequent activation of P2RX2 and/or P2RX3 purinergic receptors. Pannexin hemichannels act as downstream mediators of toxin-evoked ATP release. In vivo, it elicits nonneurogenic inflammatory pain, thermal hyperalgesia, and mechanical allodynia, of which the latter is completely dependent on purinergic signaling. The polypeptide is Basic phospholipase A2 homolog MjTX-I (Bothrops moojeni (Lance-headed viper)).